A 404-amino-acid chain; its full sequence is Cysteine desulfurase IscS (404 aa).

Pyridoxal 5'-phosphate-binding positions include 75 to 76, Asn-155, Gln-183, and 203 to 205; these read AT and SGH. An N6-(pyridoxal phosphate)lysine modification is found at Lys-206. Pyridoxal 5'-phosphate is bound at residue Thr-243. Cys-328 serves as the catalytic Cysteine persulfide intermediate. Position 328 (Cys-328) interacts with [2Fe-2S] cluster.

This sequence belongs to the class-V pyridoxal-phosphate-dependent aminotransferase family. NifS/IscS subfamily. In terms of assembly, homodimer. Forms a heterotetramer with IscU, interacts with other sulfur acceptors. It depends on pyridoxal 5'-phosphate as a cofactor.

The protein localises to the cytoplasm. It carries out the reaction (sulfur carrier)-H + L-cysteine = (sulfur carrier)-SH + L-alanine. Its pathway is cofactor biosynthesis; iron-sulfur cluster biosynthesis. Master enzyme that delivers sulfur to a number of partners involved in Fe-S cluster assembly, tRNA modification or cofactor biosynthesis. Catalyzes the removal of elemental sulfur atoms from cysteine to produce alanine. Functions as a sulfur delivery protein for Fe-S cluster synthesis onto IscU, an Fe-S scaffold assembly protein, as well as other S acceptor proteins. In Actinobacillus succinogenes (strain ATCC 55618 / DSM 22257 / CCUG 43843 / 130Z), this protein is Cysteine desulfurase IscS.